Here is a 317-residue protein sequence, read N- to C-terminus: Urease accessory protein 6 (317 aa).

The protein belongs to the UreF family. URE4, URE6 and URE7 may form a complex that acts as a GTP-hydrolysis-dependent molecular chaperone, activating the urease apoprotein URE1.

Functionally, urease accessory protein required for the maturation and activation of urease via the functional incorporation of the urease nickel metallocenter. Plays a role in host brain invasion. This is Urease accessory protein 6 from Cryptococcus neoformans var. grubii serotype A (strain H99 / ATCC 208821 / CBS 10515 / FGSC 9487) (Filobasidiella neoformans var. grubii).